Consider the following 402-residue polypeptide: Protein PMR5 (402 aa).

Residues 7 to 23 (LLGISVVSAIFFLVLQQ) traverse the membrane as a helical; Signal-anchor for type II membrane protein segment. The interval 40 to 60 (GSSSGSSGNQYSSSRPSAGFQ) is disordered. Over residues 41-56 (SSSGSSGNQYSSSRPS) the composition is skewed to low complexity. The short motif at 140 to 142 (GDS) is the GDS motif element. A DCXHWCLPGXXDXWN motif motif is present at residues 379-393 (DCSHWCLPGLPDTWN).

The protein belongs to the PC-esterase family. TBL subfamily. In terms of tissue distribution, expressed in flowers, siliques, stems and leaves.

The protein resides in the membrane. In terms of biological role, required for nonhost resistance (NHR) during plant-microbe interactions. Plants mutated in PMR5 are resistant to powdery mildew species. May act as a bridging protein that binds pectin and other cell wall polysaccharides. Probably involved in maintaining esterification of pectins. May be involved in the specific O-acetylation of cell wall polymers. This Arabidopsis thaliana (Mouse-ear cress) protein is Protein PMR5 (PMR5).